Consider the following 926-residue polypeptide: Sperm-associated antigen 1 (926 aa).

TPR repeat units follow at residues Ala209–Val242, Ala244–Asn275, and Val276–Asn309. Positions Glu318 to Gly452 are disordered. Ser347 and Ser354 each carry phosphoserine. Over residues Gly352–Ala368 the composition is skewed to basic and acidic residues. Residues Glu369–Pro379 are compositionally biased toward low complexity. A Phosphoserine modification is found at Ser423. Gly residues predominate over residues Ala428–Gly441. 6 TPR repeats span residues Pro445 to Ala478, Ser487 to Ser520, Lys522 to Leu554, Phe623 to Glu656, Cys657 to Asn690, and Lys692 to Ile724. Basic and acidic residues-rich tracts occupy residues Ile758–Gly769 and Lys784–Pro799. A disordered region spans residues Ile758 to Ala801. A GTP-binding site is contributed by Ala781 to Ser788. Residue Ser791 is modified to Phosphoserine.

Present in most tissues, including lung, with the strongest expression in brain, colon, kidney, and testis. In sperm and testis, detected in particular in pachytene primary spermatocytes. Up-regulated in pancreatic tumor tissues and not in normal pancreatic tissue.

It localises to the cytoplasm. The protein localises to the dynein axonemal particle. May play a role in the cytoplasmic assembly of the ciliary dynein arms. May play a role in fertilization. Binds GTP and has GTPase activity. The polypeptide is Sperm-associated antigen 1 (SPAG1) (Homo sapiens (Human)).